Consider the following 2251-residue polypeptide: U3 small nucleolar RNA-associated protein 10 (2251 aa).

The stretch at 945 to 983 is one HEAT repeat; it reads VVPLLLTALADAEAAIRLAAIACLAHILAICKYAGDLAK. 2 helical membrane-spanning segments follow: residues 962–982 and 1460–1480; these read LAAIACLAHILAICKYAGDLA and LLVDILGADDFAAAVAMLLVD.

The protein belongs to the HEATR1/UTP10 family. Component of the ribosomal small subunit (SSU) processome.

The protein resides in the nucleus. It localises to the nucleolus. It is found in the membrane. In terms of biological role, involved in nucleolar processing of pre-18S ribosomal RNA. Involved in ribosome biosynthesis. The protein is U3 small nucleolar RNA-associated protein 10 of Mycosarcoma maydis (Corn smut fungus).